The chain runs to 182 residues: ATP synthase subunit delta (182 aa).

It belongs to the ATPase delta chain family. F-type ATPases have 2 components, F(1) - the catalytic core - and F(0) - the membrane proton channel. F(1) has five subunits: alpha(3), beta(3), gamma(1), delta(1), epsilon(1). CF(0) has four main subunits: a(1), b(1), b'(1) and c(10-14). The alpha and beta chains form an alternating ring which encloses part of the gamma chain. F(1) is attached to F(0) by a central stalk formed by the gamma and epsilon chains, while a peripheral stalk is formed by the delta, b and b' chains.

It is found in the cellular thylakoid membrane. F(1)F(0) ATP synthase produces ATP from ADP in the presence of a proton or sodium gradient. F-type ATPases consist of two structural domains, F(1) containing the extramembraneous catalytic core and F(0) containing the membrane proton channel, linked together by a central stalk and a peripheral stalk. During catalysis, ATP synthesis in the catalytic domain of F(1) is coupled via a rotary mechanism of the central stalk subunits to proton translocation. In terms of biological role, this protein is part of the stalk that links CF(0) to CF(1). It either transmits conformational changes from CF(0) to CF(1) or is implicated in proton conduction. In Parasynechococcus marenigrum (strain WH8102), this protein is ATP synthase subunit delta.